The chain runs to 172 residues: Ribosome maturation factor RimM (172 aa).

The 74-residue stretch at aspartate 95 to leucine 168 folds into the PRC barrel domain.

The protein belongs to the RimM family. In terms of assembly, binds ribosomal protein uS19.

Its subcellular location is the cytoplasm. Its function is as follows. An accessory protein needed during the final step in the assembly of 30S ribosomal subunit, possibly for assembly of the head region. Essential for efficient processing of 16S rRNA. May be needed both before and after RbfA during the maturation of 16S rRNA. It has affinity for free ribosomal 30S subunits but not for 70S ribosomes. The chain is Ribosome maturation factor RimM from Streptococcus pneumoniae (strain P1031).